Consider the following 229-residue polypeptide: Flavin-dependent thymidylate synthase (229 aa).

One can recognise a ThyX domain in the interval 1–217 (MEFKVLDKGF…PWTFESFLKF (217 aa)). FAD contacts are provided by residues threonine 55, 78–80 (RHR), and glutamate 86. DUMP-binding positions include 75–78 (QWFR), 86–90 (EASLR), and arginine 156. Positions 78–88 (RHRIGSFNEAS) match the ThyX motif motif. Residues 172-174 (NAR) and asparagine 178 contribute to the FAD site. Arginine 183 contacts dUMP. The active-site Involved in ionization of N3 of dUMP, leading to its activation is arginine 183.

This sequence belongs to the thymidylate synthase ThyX family. In terms of assembly, homotetramer. Requires FAD as cofactor.

The enzyme catalyses dUMP + (6R)-5,10-methylene-5,6,7,8-tetrahydrofolate + NADPH + H(+) = dTMP + (6S)-5,6,7,8-tetrahydrofolate + NADP(+). Its pathway is pyrimidine metabolism; dTTP biosynthesis. In terms of biological role, catalyzes the reductive methylation of 2'-deoxyuridine-5'-monophosphate (dUMP) to 2'-deoxythymidine-5'-monophosphate (dTMP) while utilizing 5,10-methylenetetrahydrofolate (mTHF) as the methyl donor, and NADPH and FADH(2) as the reductant. The chain is Flavin-dependent thymidylate synthase from Thermosipho melanesiensis (strain DSM 12029 / CIP 104789 / BI429).